A 185-amino-acid polypeptide reads, in one-letter code: Elongation factor P (185 aa).

Belongs to the elongation factor P family.

Its subcellular location is the cytoplasm. It participates in protein biosynthesis; polypeptide chain elongation. In terms of biological role, involved in peptide bond synthesis. Stimulates efficient translation and peptide-bond synthesis on native or reconstituted 70S ribosomes in vitro. Probably functions indirectly by altering the affinity of the ribosome for aminoacyl-tRNA, thus increasing their reactivity as acceptors for peptidyl transferase. The sequence is that of Elongation factor P from Deinococcus radiodurans (strain ATCC 13939 / DSM 20539 / JCM 16871 / CCUG 27074 / LMG 4051 / NBRC 15346 / NCIMB 9279 / VKM B-1422 / R1).